The chain runs to 745 residues: Elongation factor G, mitochondrial (745 aa).

Residues Glu-40–Gly-317 enclose the tr-type G domain. GTP-binding positions include Ala-49–Thr-56, Asp-116–His-120, and Asn-170–Asp-173.

This sequence belongs to the TRAFAC class translation factor GTPase superfamily. Classic translation factor GTPase family. EF-G/EF-2 subfamily.

It is found in the mitochondrion. It participates in protein biosynthesis; polypeptide chain elongation. Its function is as follows. Mitochondrial GTPase that catalyzes the GTP-dependent ribosomal translocation step during translation elongation. During this step, the ribosome changes from the pre-translocational (PRE) to the post-translocational (POST) state as the newly formed A-site-bound peptidyl-tRNA and P-site-bound deacylated tRNA move to the P and E sites, respectively. Catalyzes the coordinated movement of the two tRNA molecules, the mRNA and conformational changes in the ribosome. Essential during development as it acts as a retrograde signal from mitochondria to the nucleus to slow down cell proliferation if mitochondrial energy output is low. In Drosophila erecta (Fruit fly), this protein is Elongation factor G, mitochondrial.